A 213-amino-acid polypeptide reads, in one-letter code: Putative 3-methyladenine DNA glycosylase (213 aa).

A disordered region spans residues 165 to 187 (GTPVPPDQVRNGPRTGVSGDGGV).

It belongs to the DNA glycosylase MPG family.

This Streptomyces avermitilis (strain ATCC 31267 / DSM 46492 / JCM 5070 / NBRC 14893 / NCIMB 12804 / NRRL 8165 / MA-4680) protein is Putative 3-methyladenine DNA glycosylase.